The chain runs to 243 residues: MQFQLFSFVLIILNCVDYSHCQANRWRRSKRASYGTNPICKGCLSCSKDNGCLRCQPKLFFYLRREGMRQYGECLQSCPPGYYGVRGPDMNRCSRCRIENCDSCFSRDFCIKCKSGFYSHKGQCFEECPEGFAPLDDTMVCVDGCEVGPWSEWGTCSRNNRTCGFKWGLETRTRQIVKKPAKDTIPCPTIAESRRCKMAMRHCPGGTRTTKKKDKKNKKKKKKLLERAQEQHSVVLATDRSSQ.

The N-terminal stretch at 1–21 (MQFQLFSFVLIILNCVDYSHC) is a signal peptide. 11 cysteine pairs are disulfide-bonded: Cys-40–Cys-46, Cys-43–Cys-52, Cys-55–Cys-74, Cys-78–Cys-93, Cys-96–Cys-104, Cys-101–Cys-110, Cys-113–Cys-124, Cys-128–Cys-141, Cys-145–Cys-187, Cys-156–Cys-163, and Cys-196–Cys-203. The stretch at 90–134 (MNRCSRCRIENCDSCFSRDFCIKCKSGFYSHKGQCFEECPEGFAP) is one FU repeat. The TSP type-1 domain occupies 144–204 (GCEVGPWSEW…RCKMAMRHCP (61 aa)). A glycan (N-linked (GlcNAc...) asparagine) is linked at Asn-160. Residues 202–243 (HCPGGTRTTKKKDKKNKKKKKKLLERAQEQHSVVLATDRSSQ) form a disordered region. Residues 209–224 (TTKKKDKKNKKKKKKL) are compositionally biased toward basic residues.

The protein belongs to the R-spondin family. In terms of assembly, binds heparin.

Its subcellular location is the secreted. In terms of biological role, activator of the canonical Wnt signaling pathway by acting as a ligand for lgr4-6 receptors. Upon binding to lgr4-6 (lgr4, lgr5 or lgr6), lgr4-6 associate with phosphorylated lrp6 and frizzled receptors that are activated by extracellular Wnt receptors, triggering the canonical Wnt signaling pathway to increase expression of target genes. Acts both in the canonical. Wnt/beta-catenin-dependent pathway and in non-canonical Wnt signaling pathway. Activates neural markers and promotes muscle formation. Overexpression blocks activin, nodal and BMP4 signaling, suggesting that it may negatively regulate the TGF-beta pathway. During embryonic development, plays a crucial role in limb specification, amplifying the Wnt signaling pathway independently of LGR4-6 receptors, possibly by acting as a direct antagonistic ligand to RNF43 and ZNRF3, hence governing the number of limbs an embryo should form. This Xenopus tropicalis (Western clawed frog) protein is R-spondin-2 (rspo2).